We begin with the raw amino-acid sequence, 345 residues long: Platelet-derived growth factor C (345 aa).

An N-terminal signal peptide occupies residues 1–22 (MLLLGLLLLTSALAGRRHGAAA). Positions 46–163 (HEKIITVTSN…PGFCIHYTLL (118 aa)) constitute a CUB domain. An N-linked (GlcNAc...) asparagine glycan is attached at Asn-55. Cystine bridges form between Cys-104–Cys-124, Cys-250–Cys-294, Cys-280–Cys-335, and Cys-287–Cys-337.

Belongs to the PDGF/VEGF growth factor family. In terms of assembly, homodimer; disulfide-linked. Interacts with PDGFRA homodimers, and with heterodimers formed by PDGFRA and PDGFRB. Proteolytic removal of the N-terminal CUB domain releasing the core domain is necessary for unmasking the receptor-binding epitopes of the core domain. Cleavage after basic residues in the hinge region (region connecting the CUB and growth factor domains) gives rise to the receptor-binding form.

The protein localises to the secreted. Growth factor that plays an essential role in the regulation of embryonic development, cell proliferation, cell migration, survival and chemotaxis. Potent mitogen and chemoattractant for cells of mesenchymal origin. Required for normal skeleton formation during embryonic development. Required for normal skin morphogenesis during embryonic development. Plays an important role in wound healing, in angiogenesis and blood vessel development. This chain is Platelet-derived growth factor C (PDGFC), found in Gallus gallus (Chicken).